The primary structure comprises 593 residues: Root phototropism protein 2 (593 aa).

Residues 32–100 (TDVVVEVGEA…CYGVNFEITV (69 aa)) form the BTB domain. The NPH3 domain maps to 187-469 (NWWTEELCIL…LHALYYDQLK (283 aa)). Residue Tyr-410 is modified to Phosphotyrosine.

This sequence belongs to the NPH3 family. In terms of assembly, interacts with RPT3 and PHOT1. As to expression, expressed in hypocotyls, guard cells and mesophyll cells.

Its pathway is protein modification; protein ubiquitination. May act as a substrate-specific adapter of an E3 ubiquitin-protein ligase complex (CUL3-RBX1-BTB) which mediates the ubiquitination and subsequent proteasomal degradation of target proteins. Signal transducer of the phototropic response and photo-induced movements. Necessary for root phototropism. Involved in hypocotyl phototropism under high rate but not under low rate light. Regulates stomata opening. Seems to be not involved in chloroplast accumulation and translocation. In Arabidopsis thaliana (Mouse-ear cress), this protein is Root phototropism protein 2 (RPT2).